We begin with the raw amino-acid sequence, 350 residues long: RING finger protein 44 (350 aa).

Residues 298–339 (CVVCFSDFEVRQLLRVLPCNHEFHAKCVDKWLKANRTCPICR) form an RING-type; atypical zinc finger.

The chain is RING finger protein 44 (Rnf44) from Rattus norvegicus (Rat).